A 164-amino-acid polypeptide reads, in one-letter code: NADH-quinone oxidoreductase subunit I 1 (164 aa).

4Fe-4S ferredoxin-type domains lie at 54–84 and 95–124; these read LRRYPNGEERCIACKLCEAICPAQAITIEAG and VRYDIDMVKCIYCGFCQEACPVDAIVEGPN. [4Fe-4S] cluster is bound by residues Cys64, Cys67, Cys70, Cys74, Cys104, Cys107, Cys110, and Cys114.

Belongs to the complex I 23 kDa subunit family. NDH-1 is composed of 14 different subunits. Subunits NuoA, H, J, K, L, M, N constitute the membrane sector of the complex. It depends on [4Fe-4S] cluster as a cofactor.

It is found in the cell inner membrane. It carries out the reaction a quinone + NADH + 5 H(+)(in) = a quinol + NAD(+) + 4 H(+)(out). Functionally, NDH-1 shuttles electrons from NADH, via FMN and iron-sulfur (Fe-S) centers, to quinones in the respiratory chain. The immediate electron acceptor for the enzyme in this species is believed to be ubiquinone. Couples the redox reaction to proton translocation (for every two electrons transferred, four hydrogen ions are translocated across the cytoplasmic membrane), and thus conserves the redox energy in a proton gradient. In Rhizobium meliloti (strain 1021) (Ensifer meliloti), this protein is NADH-quinone oxidoreductase subunit I 1.